Consider the following 127-residue polypeptide: Small ribosomal subunit protein uS11 (127 aa).

This sequence belongs to the universal ribosomal protein uS11 family. As to quaternary structure, part of the 30S ribosomal subunit. Interacts with proteins S7 and S18. Binds to IF-3.

Its function is as follows. Located on the platform of the 30S subunit, it bridges several disparate RNA helices of the 16S rRNA. Forms part of the Shine-Dalgarno cleft in the 70S ribosome. This is Small ribosomal subunit protein uS11 from Anaeromyxobacter dehalogenans (strain 2CP-C).